A 511-amino-acid chain; its full sequence is TNNNNFNNINNNNNNNNNNNNNNNNNNNNNNNNNNNSNNNNNNNNNYNSNNNNNNNNNNNNNNNNNNNNNNNNNNNNNNNNNNNNNNNNNNNNNNNNNNTSFNDNCNNNSNYHNHSNHHPLFESLQNINQYPLSPNNNKSSNQHLSHSSSNVNSQYYQTPYYQPSQKQNSPNSTPPLNGCQYENHNLNSNNTFFKKNTNHYISQQLYQQQFNQNVNNNNNNNNISNNNNNSYNINCNNNNNNNNSNYNNNSYNNNNNYNNNNNNNNNNNNNNNNNNNNNNIFNENNNNNNNNNNNNNNNCNNNYNNNDNNENKYCVPKIEIPQKNLQYSPPPFQLDSGSTTPKTPSAPTSPVLSPKTSNKICDLVLNIVPICQELSNEDGYQNKELLNKIQEYFEDAIREIKKIKKTRLPLMKQNHTKESDDKTFYSLRPRRNRKCTIKTKTLQSSNSEEIVCQACGTRASPEWRKGPDGFKSLCNACGLYYAKTKKRENEIIGQPDLIPKHMKIHNLIND.

A compositionally biased stretch (low complexity) spans 1-111 (TNNNNFNNIN…FNDNCNNNSN (111 aa)). 3 disordered regions span residues 1-194 (TNNN…NTFF), 214-313 (NVNN…NENK), and 325-355 (NLQY…VLSP). Residues 124-135 (SLQNINQYPLSP) show a composition bias toward polar residues. The segment covering 136–166 (NNNKSSNQHLSHSSSNVNSQYYQTPYYQPSQ) has biased composition (low complexity). Polar residues predominate over residues 167-185 (KQNSPNSTPPLNGCQYENH). 2 stretches are compositionally biased toward low complexity: residues 214 to 309 (NVNN…NNDN) and 337 to 351 (SGST…PTSP). A GATA-type zinc finger spans residues 453–478 (CQACGTRASPEWRKGPDGFKSLCNAC).

The protein is GATA zinc finger domain-containing protein 15 (gtaO) of Dictyostelium discoideum (Social amoeba).